A 276-amino-acid polypeptide reads, in one-letter code: Shikimate dehydrogenase (NADP(+)) (276 aa).

Shikimate-binding positions include 15 to 17 (SMS) and threonine 63. The active-site Proton acceptor is lysine 67. Aspartate 79 provides a ligand contact to NADP(+). Residues asparagine 88 and aspartate 103 each contribute to the shikimate site. NADP(+) contacts are provided by residues 130-134 (GAGGA), 154-159 (NRTLSR), and isoleucine 217. Tyrosine 219 contributes to the shikimate binding site. Glycine 240 provides a ligand contact to NADP(+).

This sequence belongs to the shikimate dehydrogenase family. Homodimer.

The catalysed reaction is shikimate + NADP(+) = 3-dehydroshikimate + NADPH + H(+). It participates in metabolic intermediate biosynthesis; chorismate biosynthesis; chorismate from D-erythrose 4-phosphate and phosphoenolpyruvate: step 4/7. Functionally, involved in the biosynthesis of the chorismate, which leads to the biosynthesis of aromatic amino acids. Catalyzes the reversible NADPH linked reduction of 3-dehydroshikimate (DHSA) to yield shikimate (SA). The sequence is that of Shikimate dehydrogenase (NADP(+)) from Oceanobacillus iheyensis (strain DSM 14371 / CIP 107618 / JCM 11309 / KCTC 3954 / HTE831).